The following is a 75-amino-acid chain: Vacuolar ATPase assembly integral membrane protein VMA21 (75 aa).

The Cytoplasmic portion of the chain corresponds to 1 to 8; sequence MPVDVAPG. Residues 9–29 traverse the membrane as a helical segment; sequence VIKKLMFFTAAMVICPLLTFF. At 30–41 the chain is on the lumenal side; that stretch reads SIKQFTTNTIVS. A helical membrane pass occupies residues 42-62; that stretch reads GGLAALAANLVLIGYIVVAFM. Over 63–75 the chain is Cytoplasmic; that stretch reads EDTTDVKAESKKD.

This sequence belongs to the VMA21 family.

The protein resides in the endoplasmic reticulum membrane. The protein localises to the endoplasmic reticulum-Golgi intermediate compartment membrane. It localises to the cytoplasmic vesicle. It is found in the COPII-coated vesicle membrane. Functionally, required for the assembly of the V0 complex of the vacuolar ATPase (V-ATPase) in the endoplasmic reticulum. The sequence is that of Vacuolar ATPase assembly integral membrane protein VMA21 from Vanderwaltozyma polyspora (strain ATCC 22028 / DSM 70294 / BCRC 21397 / CBS 2163 / NBRC 10782 / NRRL Y-8283 / UCD 57-17) (Kluyveromyces polysporus).